Reading from the N-terminus, the 343-residue chain is MSKDTLILAIESSCDETSASVIKNGKEILSNTVLSQIESHKRFGGVVPEVASRHHVEGITTTIEEALNTADTSMEEIDAVAVTEGPGLIGALLIGINAAKALAFAYDKPLVPVHHIAGHIYANNLEEPFEFPLMALIVSGGHTELVYMKDHLSFEVIGETRDDAVGEAYDKVARTIGLSYPGGPQVDKLAAEGEDTYDFPRVWLEQDSFDFSFSGLKSAVINKLHNLKQKNEAIIPENVATSFQNSVVEVLVGKAIKACETYNVHQLIVAGGVASNKGLRQELKKACAEHDIKLSIPSPKLCTDNAAMIGAAGHYMYEAGMRSDMHLNGHSSLDIEDFSVEKE.

Fe cation is bound by residues H115 and H119. Substrate-binding positions include 137–141 (IVSGG), D170, G183, D187, and N276. D304 serves as a coordination point for Fe cation.

Belongs to the KAE1 / TsaD family. It depends on Fe(2+) as a cofactor.

It is found in the cytoplasm. The enzyme catalyses L-threonylcarbamoyladenylate + adenosine(37) in tRNA = N(6)-L-threonylcarbamoyladenosine(37) in tRNA + AMP + H(+). Required for the formation of a threonylcarbamoyl group on adenosine at position 37 (t(6)A37) in tRNAs that read codons beginning with adenine. Is involved in the transfer of the threonylcarbamoyl moiety of threonylcarbamoyl-AMP (TC-AMP) to the N6 group of A37, together with TsaE and TsaB. TsaD likely plays a direct catalytic role in this reaction. The chain is tRNA N6-adenosine threonylcarbamoyltransferase from Staphylococcus carnosus (strain TM300).